Reading from the N-terminus, the 292-residue chain is ATP synthase gamma chain (292 aa).

Belongs to the ATPase gamma chain family. In terms of assembly, F-type ATPases have 2 components, CF(1) - the catalytic core - and CF(0) - the membrane proton channel. CF(1) has five subunits: alpha(3), beta(3), gamma(1), delta(1), epsilon(1). CF(0) has three main subunits: a, b and c.

Its subcellular location is the cell inner membrane. Produces ATP from ADP in the presence of a proton gradient across the membrane. The gamma chain is believed to be important in regulating ATPase activity and the flow of protons through the CF(0) complex. This chain is ATP synthase gamma chain, found in Nitrobacter hamburgensis (strain DSM 10229 / NCIMB 13809 / X14).